A 257-amino-acid polypeptide reads, in one-letter code: Isoprenyl transferase 1 (257 aa).

Asp-37 is an active-site residue. Asp-37 serves as a coordination point for Mg(2+). Substrate is bound by residues 38-41, Trp-42, His-54, and 82-84; these read GNRR and STD. The Proton acceptor role is filled by Asn-85. Residues Phe-86, Arg-88, Arg-206, and 212 to 214 contribute to the substrate site; that span reads RLS. Glu-225 contributes to the Mg(2+) binding site.

Belongs to the UPP synthase family. As to quaternary structure, homodimer. It depends on Mg(2+) as a cofactor.

In terms of biological role, catalyzes the condensation of isopentenyl diphosphate (IPP) with allylic pyrophosphates generating different type of terpenoids. This is Isoprenyl transferase 1 from Streptomyces avermitilis (strain ATCC 31267 / DSM 46492 / JCM 5070 / NBRC 14893 / NCIMB 12804 / NRRL 8165 / MA-4680).